The primary structure comprises 323 residues: MDSKHQCVKLNDGHFMPVLGFGTYAPPEVPRSKALEVTKLAIEAGFRHIDSAHLYNNEEQVGLAIRSKIADGSVKREDIFYTSKLWSTFHRPELVRPALENSLKKAQLDYVDLYLIHSPMSLKPGEELSPTDENGKVIFDIVDLCTTWEAMEECKDAGLAKSIGVSNFNRRQLEMILNKPGLKYKPVCNQVECHPYFNRSKLLDFCKSKDIVLVAYSALGSQRDKRWVDPNSPVLLEDPVLCALAKKHKRTPALIALRYQLQRGVVVLAKSYNEQRIRENVQVFEFQLTAEDMRAIDGLNRNLHYFNSDSLASHPNYPYSDEY.

NADP(+) is bound by residues 20-24 (GFGTY) and D50. Y55 acts as the Proton donor in catalysis. A substrate-binding site is contributed by H117. Residues 166–167 (SN), Q190, 216–221 (YSALGS), and 270–280 (KSYNEQRIREN) each bind NADP(+).

It belongs to the aldo/keto reductase family.

The protein resides in the cytoplasm. It carries out the reaction a 3alpha-hydroxysteroid + NADP(+) = a 3-oxosteroid + NADPH + H(+). The catalysed reaction is a 3alpha-hydroxysteroid + NAD(+) = a 3-oxosteroid + NADH + H(+). It catalyses the reaction prostaglandin F2alpha + NADP(+) = prostaglandin D2 + NADPH + H(+). The enzyme catalyses testosterone + NAD(+) = androst-4-ene-3,17-dione + NADH + H(+). It carries out the reaction testosterone + NADP(+) = androst-4-ene-3,17-dione + NADPH + H(+). The catalysed reaction is prostaglandin F2alpha + NADP(+) = prostaglandin H2 + NADPH + H(+). It catalyses the reaction prostaglandin D2 + NADPH + H(+) = 11beta-prostaglandin F2 + NADP(+). The enzyme catalyses prostaglandin D2-ethanolamide + NADPH + H(+) = 11beta-prostaglandin F2-ethanolamide + NADP(+). It carries out the reaction 17beta-estradiol + NADP(+) = estrone + NADPH + H(+). The catalysed reaction is 17beta-estradiol + NAD(+) = estrone + NADH + H(+). It catalyses the reaction (20S)-hydroxypregn-4-en-3-one + NADP(+) = progesterone + NADPH + H(+). The enzyme catalyses (20S)-hydroxypregn-4-en-3-one + NAD(+) = progesterone + NADH + H(+). It carries out the reaction 5alpha-androstane-3alpha,17beta-diol + NADP(+) = 17beta-hydroxy-5alpha-androstan-3-one + NADPH + H(+). The catalysed reaction is 5alpha-androstane-3alpha,17beta-diol + NAD(+) = 17beta-hydroxy-5alpha-androstan-3-one + NADH + H(+). It catalyses the reaction androsterone + NADPH + H(+) = 5alpha-androstane-3alpha,17beta-diol + NADP(+). The enzyme catalyses 5alpha-androstane-3alpha,17beta-diol + NAD(+) = androsterone + NADH + H(+). It carries out the reaction 5alpha-androstane-3beta,17beta-diol + NADP(+) = 17beta-hydroxy-5alpha-androstan-3-one + NADPH + H(+). The catalysed reaction is 9-cis-retinol + NADP(+) = 9-cis-retinal + NADPH + H(+). It participates in steroid metabolism. Its function is as follows. Cytosolic aldo-keto reductase that catalyzes the NADH and NADPH-dependent reduction of ketosteroids to hydroxysteroids. Acts as a NAD(P)(H)-dependent 3-, 17- and 20-ketosteroid reductase on the steroid nucleus and side chain and regulates the metabolism of androgens, estrogens and progesterone. Displays the ability to catalyze both oxidation and reduction in vitro, but most probably acts as a reductase in vivo since the oxidase activity measured in vitro is inhibited by physiological concentration of NADPH. Acts preferentially as a 17-ketosteroid reductase and has the highest catalytic efficiency of the AKR1C enzyme for the reduction of delta4-androstenedione to form testosterone. Reduces prostaglandin (PG) D2 to 11beta-prostaglandin F2, progesterone to 20alpha-hydroxyprogesterone and estrone to 17beta-estradiol. Catalyzes the transformation of the potent androgen dihydrotestosterone (DHT) into the less active form, 5-alpha-androstan-3-alpha,17-beta-diol (3-alpha-diol). Also displays retinaldehyde reductase activity toward 9-cis-retinal. This Pongo abelii (Sumatran orangutan) protein is Aldo-keto reductase family 1 member C3 (AKR1C3).